Reading from the N-terminus, the 307-residue chain is 2-phospho-L-lactate transferase (307 aa).

7,8-didemethyl-8-hydroxy-5-deazariboflavin is bound by residues aspartate 48 and lysine 87.

Belongs to the CofD family. Homodimer. Requires Mg(2+) as cofactor.

It catalyses the reaction (2S)-lactyl-2-diphospho-5'-guanosine + 7,8-didemethyl-8-hydroxy-5-deazariboflavin = oxidized coenzyme F420-0 + GMP + H(+). It functions in the pathway cofactor biosynthesis; coenzyme F420 biosynthesis. In terms of biological role, catalyzes the transfer of the 2-phospholactate moiety from (2S)-lactyl-2-diphospho-5'-guanosine to 7,8-didemethyl-8-hydroxy-5-deazariboflavin (FO) with the formation of oxidized coenzyme F420-0 and GMP. The polypeptide is 2-phospho-L-lactate transferase (Methanosarcina acetivorans (strain ATCC 35395 / DSM 2834 / JCM 12185 / C2A)).